The primary structure comprises 516 residues: D-aminopeptidase (516 aa).

Residue S61 is the Nucleophile of the active site. K64 functions as the Proton donor/acceptor in the catalytic mechanism. Positions R476–D486 are important for specificity. D480 is a substrate binding site.

Belongs to the peptidase S12 family. Homodimer.

The catalysed reaction is Release of an N-terminal D-amino acid from a peptide, Xaa-|-Yaa-, in which Xaa is preferably D-Ala, D-Ser or D-Thr. D-amino acid amides and methyl esters also are hydrolyzed, as is glycine amide.. Its activity is regulated as follows. Inhibited by beta-lactam compounds such as 6-aminopenicillic acid, 7-aminocephalosporanic acid, benzylpenicillin and ampicillin. Inhibited by p-chloromercuribenzoate. Hydrolyzes N-terminal residues in D-amino acid-containing peptides. This is D-aminopeptidase from Cereibacter sphaeroides (strain ATCC 17029 / ATH 2.4.9) (Rhodobacter sphaeroides).